Consider the following 106-residue polypeptide: Small ribosomal subunit protein uS10 (106 aa).

Belongs to the universal ribosomal protein uS10 family. In terms of assembly, part of the 30S ribosomal subunit.

Its function is as follows. Involved in the binding of tRNA to the ribosomes. This chain is Small ribosomal subunit protein uS10, found in Prochlorococcus marinus (strain MIT 9515).